Reading from the N-terminus, the 317-residue chain is tRNA-cytidine(32) 2-sulfurtransferase (317 aa).

The PP-loop motif motif lies at 46–51; it reads SGGKDS. [4Fe-4S] cluster contacts are provided by C121, C124, and C212.

It belongs to the TtcA family. Homodimer. Mg(2+) is required as a cofactor. It depends on [4Fe-4S] cluster as a cofactor.

Its subcellular location is the cytoplasm. It carries out the reaction cytidine(32) in tRNA + S-sulfanyl-L-cysteinyl-[cysteine desulfurase] + AH2 + ATP = 2-thiocytidine(32) in tRNA + L-cysteinyl-[cysteine desulfurase] + A + AMP + diphosphate + H(+). Its pathway is tRNA modification. Catalyzes the ATP-dependent 2-thiolation of cytidine in position 32 of tRNA, to form 2-thiocytidine (s(2)C32). The sulfur atoms are provided by the cysteine/cysteine desulfurase (IscS) system. In Shewanella loihica (strain ATCC BAA-1088 / PV-4), this protein is tRNA-cytidine(32) 2-sulfurtransferase.